Here is a 91-residue protein sequence, read N- to C-terminus: DNA-directed RNA polymerase subunit Rpo11 (91 aa).

It belongs to the archaeal Rpo11/eukaryotic RPB11/RPC19 RNA polymerase subunit family. Part of the RNA polymerase complex.

The protein resides in the cytoplasm. It catalyses the reaction RNA(n) + a ribonucleoside 5'-triphosphate = RNA(n+1) + diphosphate. In terms of biological role, DNA-dependent RNA polymerase (RNAP) catalyzes the transcription of DNA into RNA using the four ribonucleoside triphosphates as substrates. This Methanothrix thermoacetophila (strain DSM 6194 / JCM 14653 / NBRC 101360 / PT) (Methanosaeta thermophila) protein is DNA-directed RNA polymerase subunit Rpo11.